The sequence spans 156 residues: ATP synthase subunit b (156 aa).

A helical transmembrane segment spans residues 7–29; sequence LLGQAISFALFVWFCMKYVWPPL.

Belongs to the ATPase B chain family. In terms of assembly, F-type ATPases have 2 components, F(1) - the catalytic core - and F(0) - the membrane proton channel. F(1) has five subunits: alpha(3), beta(3), gamma(1), delta(1), epsilon(1). F(0) has three main subunits: a(1), b(2) and c(10-14). The alpha and beta chains form an alternating ring which encloses part of the gamma chain. F(1) is attached to F(0) by a central stalk formed by the gamma and epsilon chains, while a peripheral stalk is formed by the delta and b chains.

It localises to the cell inner membrane. F(1)F(0) ATP synthase produces ATP from ADP in the presence of a proton or sodium gradient. F-type ATPases consist of two structural domains, F(1) containing the extramembraneous catalytic core and F(0) containing the membrane proton channel, linked together by a central stalk and a peripheral stalk. During catalysis, ATP synthesis in the catalytic domain of F(1) is coupled via a rotary mechanism of the central stalk subunits to proton translocation. In terms of biological role, component of the F(0) channel, it forms part of the peripheral stalk, linking F(1) to F(0). The polypeptide is ATP synthase subunit b (Vibrio parahaemolyticus serotype O3:K6 (strain RIMD 2210633)).